A 316-amino-acid chain; its full sequence is BTB/POZ domain-containing adapter for CUL3-mediated RhoA degradation protein 2 (316 aa).

The BTB domain occupies 28–96; sequence KYVQLNVGGS…LRDDTITLPQ (69 aa). The segment covering 268 to 279 has biased composition (polar residues); sequence EATSRSRSQASP. Residues 268-288 form a disordered region; that stretch reads EATSRSRSQASPSEDEDTFEL. Phosphoserine is present on Ser-278. At Ser-280 the chain carries Phosphoserine; by CK2.

It belongs to the BACURD family. Component of the BCR(TNFAIP1) E3 ubiquitin ligase complex, at least composed of CUL3, TNFAIP1/BACURD2 and RBX1. Interacts with RHOA; with a preference for RhoA-GDP. Interacts with RHOB. Interacts with PCNA. Interacts with CSNK2B. In terms of processing, phosphorylation at Ser-280 by CK2 facilitates the nucleus localization and increases interaction with PCNA.

It localises to the cytoplasm. It is found in the nucleus. The protein localises to the endosome. It functions in the pathway protein modification; protein ubiquitination. Substrate-specific adapter of a BCR (BTB-CUL3-RBX1) E3 ubiquitin-protein ligase complex involved in regulation of cytoskeleton structure. The BCR(TNFAIP1) E3 ubiquitin ligase complex mediates the ubiquitination of RHOA, leading to its degradation by the proteasome, thereby regulating the actin cytoskeleton and cell migration. Its interaction with RHOB may regulate apoptosis. May enhance the PCNA-dependent DNA polymerase delta activity. In Mus musculus (Mouse), this protein is BTB/POZ domain-containing adapter for CUL3-mediated RhoA degradation protein 2 (Tnfaip1).